The primary structure comprises 431 residues: Histidinol dehydrogenase (431 aa).

Positions 124, 187, and 210 each coordinate NAD(+). Ser236, Gln258, and His261 together coordinate substrate. Zn(2+) is bound by residues Gln258 and His261. Active-site proton acceptor residues include Glu325 and His326. Substrate contacts are provided by His326, Asp359, Glu413, and His418. Position 359 (Asp359) interacts with Zn(2+). Residue His418 coordinates Zn(2+).

This sequence belongs to the histidinol dehydrogenase family. It depends on Zn(2+) as a cofactor.

The enzyme catalyses L-histidinol + 2 NAD(+) + H2O = L-histidine + 2 NADH + 3 H(+). The protein operates within amino-acid biosynthesis; L-histidine biosynthesis; L-histidine from 5-phospho-alpha-D-ribose 1-diphosphate: step 9/9. In terms of biological role, catalyzes the sequential NAD-dependent oxidations of L-histidinol to L-histidinaldehyde and then to L-histidine. The sequence is that of Histidinol dehydrogenase from Legionella pneumophila (strain Paris).